A 460-amino-acid chain; its full sequence is GTPase Der (460 aa).

2 EngA-type G domains span residues 2-164 and 196-368; these read QSII…HEEF and IRVG…ENFT. Residues 8 to 15, 55 to 59, 116 to 119, 202 to 209, 249 to 253, and 313 to 316 each bind GTP; these read GKPNVGKS, DSGGL, NKVD, GRVNVGKS, DTAGI, and NKWD. Positions 369 to 453 constitute a KH-like domain; sequence QKIQTSKLNT…PLVIASRKKG (85 aa).

Belongs to the TRAFAC class TrmE-Era-EngA-EngB-Septin-like GTPase superfamily. EngA (Der) GTPase family. In terms of assembly, associates with the 50S ribosomal subunit.

In terms of biological role, GTPase that plays an essential role in the late steps of ribosome biogenesis. In Campylobacter jejuni subsp. jejuni serotype O:2 (strain ATCC 700819 / NCTC 11168), this protein is GTPase Der.